The following is a 232-amino-acid chain: N-(5'-phosphoribosyl)anthranilate isomerase (232 aa).

Belongs to the TrpF family.

The enzyme catalyses N-(5-phospho-beta-D-ribosyl)anthranilate = 1-(2-carboxyphenylamino)-1-deoxy-D-ribulose 5-phosphate. It functions in the pathway amino-acid biosynthesis; L-tryptophan biosynthesis; L-tryptophan from chorismate: step 3/5. In Wickerhamomyces anomalus (Yeast), this protein is N-(5'-phosphoribosyl)anthranilate isomerase (TRP1).